Consider the following 388-residue polypeptide: Integrase (388 aa).

Residues 70–151 (YTVADAVNDW…CLNRAVKRAM (82 aa)) form the Core-binding (CB) domain. The region spanning 173-379 (RPSKALTFAQ…VIQTGAVVMD (207 aa)) is the Tyr recombinase domain. Catalysis depends on residues Arg-208, Lys-249, Arg-330, and His-353. Tyr-363 functions as the O-(3'-phospho-DNA)-tyrosine intermediate in the catalytic mechanism.

The protein belongs to the 'phage' integrase family.

In terms of biological role, required for integration of pSAM2. This Streptomyces ambofaciens protein is Integrase (int).